The sequence spans 203 residues: RNA chaperone ProQ (203 aa).

The interval 111–138 is disordered; it reads KAKRQALAPKKPAKKVAPKRAPAVKKER.

It belongs to the ProQ family.

The protein resides in the cytoplasm. In terms of biological role, RNA chaperone with significant RNA binding, RNA strand exchange and RNA duplexing activities. The chain is RNA chaperone ProQ from Shewanella frigidimarina (strain NCIMB 400).